We begin with the raw amino-acid sequence, 461 residues long: Ornithine decarboxylase (461 aa).

Lysine 69 carries the N6-(pyridoxal phosphate)lysine modification. Residues serine 200, glycine 237, and 274–277 (EPGR) each bind pyridoxal 5'-phosphate. Phosphoserine; by CK2 is present on serine 303. 331-332 (YD) lines the substrate pocket. The Proton donor; shared with dimeric partner role is filled by cysteine 360. The residue at position 360 (cysteine 360) is an S-nitrosocysteine; in inhibited form. A substrate-binding site is contributed by aspartate 361. Residue tyrosine 389 coordinates pyridoxal 5'-phosphate.

The protein belongs to the Orn/Lys/Arg decarboxylase class-II family. In terms of assembly, homodimer. Only the dimer is catalytically active, as the active sites are constructed of residues from both monomers. Does not form a heterodimer with AZIN2. Pyridoxal 5'-phosphate serves as cofactor. In terms of processing, S-Nitrosylation inhibits the enzyme. S-Nitrosylated in vitro on 4 cysteine residues.

The enzyme catalyses L-ornithine + H(+) = putrescine + CO2. Its pathway is amine and polyamine biosynthesis; putrescine biosynthesis via L-ornithine pathway; putrescine from L-ornithine: step 1/1. Inhibited by S-nitrosylation. Inhibited by antizymes (AZs) OAZ1, OAZ2 and OAZ3 in response to polyamine levels. AZs inhibit the assembly of the functional homodimer by binding to ODC monomers. Additionally, OAZ1 targets ODC monomers for ubiquitin-independent proteolytic destruction by the 26S proteasome. Inhibited by 1-amino-oxy-3-aminopropane (APA, an isosteric analog of putrescine). Irreversibly inhibited by alpha-difluoromethylornithine (DFMO). Catalyzes the first and rate-limiting step of polyamine biosynthesis that converts ornithine into putrescine, which is the precursor for the polyamines, spermidine and spermine. Polyamines are essential for cell proliferation and are implicated in cellular processes, ranging from DNA replication to apoptosis. This is Ornithine decarboxylase (ODC1) from Homo sapiens (Human).